A 316-amino-acid chain; its full sequence is Ribonuclease HIII (316 aa).

Positions glutamine 101–lysine 316 constitute an RNase H type-2 domain. Positions 107, 108, and 211 each coordinate a divalent metal cation.

Belongs to the RNase HII family. RnhC subfamily. The cofactor is Mn(2+). Mg(2+) is required as a cofactor.

Its subcellular location is the cytoplasm. It carries out the reaction Endonucleolytic cleavage to 5'-phosphomonoester.. Endonuclease that specifically degrades the RNA of RNA-DNA hybrids. In Ureaplasma parvum serovar 3 (strain ATCC 700970), this protein is Ribonuclease HIII (rnhC).